A 550-amino-acid chain; its full sequence is uncharacterized protein (550 aa).

Positions 1–53 (MVVIANKGALWAYYCKRLLNSVTYMMYPLIRKRTMKKLLLIVGLLLACSTVMR) are cleaved as a signal peptide. 2 N-linked (GlcNAc...) asparagine glycosylation sites follow: Asn296 and Asn518.

Its subcellular location is the endoplasmic reticulum. This is an uncharacterized protein from Schizosaccharomyces pombe (strain 972 / ATCC 24843) (Fission yeast).